The sequence spans 422 residues: Adenylosuccinate synthetase (422 aa).

GTP contacts are provided by residues 11-17 (GDEGKGK) and 39-41 (GHT). D12 functions as the Proton acceptor in the catalytic mechanism. Mg(2+) is bound by residues D12 and G39. IMP is bound by residues 12 to 15 (DEGK), 37 to 40 (NAGH), T129, R143, N219, T234, and R298. H40 (proton donor) is an active-site residue. A substrate-binding site is contributed by 294–300 (VTTGRRR). GTP is bound by residues R300, 326 to 328 (KLD), and 409 to 411 (GTG).

Belongs to the adenylosuccinate synthetase family. In terms of assembly, homodimer. It depends on Mg(2+) as a cofactor.

The protein localises to the cytoplasm. The catalysed reaction is IMP + L-aspartate + GTP = N(6)-(1,2-dicarboxyethyl)-AMP + GDP + phosphate + 2 H(+). It participates in purine metabolism; AMP biosynthesis via de novo pathway; AMP from IMP: step 1/2. Functionally, plays an important role in the de novo pathway and in the salvage pathway of purine nucleotide biosynthesis. Catalyzes the first committed step in the biosynthesis of AMP from IMP. The sequence is that of Adenylosuccinate synthetase from Blastomyces gilchristii (strain SLH14081) (Blastomyces dermatitidis).